We begin with the raw amino-acid sequence, 430 residues long: Histidine--tRNA ligase (430 aa).

The protein belongs to the class-II aminoacyl-tRNA synthetase family. Homodimer.

The protein localises to the cytoplasm. It carries out the reaction tRNA(His) + L-histidine + ATP = L-histidyl-tRNA(His) + AMP + diphosphate + H(+). The protein is Histidine--tRNA ligase of Lactococcus lactis subsp. lactis (strain IL1403) (Streptococcus lactis).